A 518-amino-acid chain; its full sequence is Cytokinin hydroxylase (518 aa).

A helical transmembrane segment spans residues 1–21 (MLLTILKSLLVIFVTTILRVL). Heme is bound at residue C464.

It belongs to the cytochrome P450 family. The cofactor is heme. Expressed in roots and flowers.

Its subcellular location is the membrane. It catalyses the reaction N(6)-(dimethylallyl)adenosine 5'-phosphate + NADPH + O2 + H(+) = 9-ribosyl-trans-zeatin 5'-phosphate + NADP(+) + H2O. The enzyme catalyses N(6)-(dimethylallyl)adenosine 5'-diphosphate + NADPH + O2 + H(+) = 9-ribosyl-trans-zeatin 5'-diphosphate + NADP(+) + H2O. The catalysed reaction is N(6)-(dimethylallyl)adenosine 5'-triphosphate + NADPH + O2 + H(+) = 9-ribosyl-trans-zeatin 5'-triphosphate + NADP(+) + H2O. Its function is as follows. Cytokinin hydroxylase that catalyzes the biosynthesis of trans-zeatin via the isopentenyladenine riboside 5'-monophosphate (iPRMP)-dependent pathway. Can use isopentenyladenosine-5'-monophosphate, isopentenyladenosine-5'-diphosphate and isopentenyladenosine-5'-triphosphate as substrate. This Arabidopsis thaliana (Mouse-ear cress) protein is Cytokinin hydroxylase (CYP735A1).